We begin with the raw amino-acid sequence, 650 residues long: Acetyl-coenzyme A synthetase (650 aa).

CoA is bound by residues 191–194 (RGGR), Thr311, and Asn335. Residues 387–389 (GEP), 411–416 (DTWWQT), Asp500, and Arg515 contribute to the ATP site. CoA is bound at residue Ser523. Arg526 is an ATP binding site. Positions 537, 539, and 542 each coordinate Mg(2+). Arg584 lines the CoA pocket. N6-acetyllysine is present on Lys609.

It belongs to the ATP-dependent AMP-binding enzyme family. Mg(2+) is required as a cofactor. In terms of processing, acetylated. Deacetylation by the SIR2-homolog deacetylase activates the enzyme.

The enzyme catalyses acetate + ATP + CoA = acetyl-CoA + AMP + diphosphate. Functionally, catalyzes the conversion of acetate into acetyl-CoA (AcCoA), an essential intermediate at the junction of anabolic and catabolic pathways. AcsA undergoes a two-step reaction. In the first half reaction, AcsA combines acetate with ATP to form acetyl-adenylate (AcAMP) intermediate. In the second half reaction, it can then transfer the acetyl group from AcAMP to the sulfhydryl group of CoA, forming the product AcCoA. The polypeptide is Acetyl-coenzyme A synthetase (Shewanella sediminis (strain HAW-EB3)).